A 196-amino-acid polypeptide reads, in one-letter code: HTH-type transcriptional regulator Hpr (196 aa).

In terms of domain architecture, HTH marR-type spans 13–157 (SIVFSHKMAL…LICIVRHIYG (145 aa)). The H-T-H motif DNA-binding region spans 63–86 (ISDIASHGVMHVSTAFNFSKKLEA).

As to quaternary structure, homodimer.

Its function is as follows. Negative regulator of protease production and sporulation. In Shouchella clausii (strain KSM-K16) (Alkalihalobacillus clausii), this protein is HTH-type transcriptional regulator Hpr.